A 276-amino-acid chain; its full sequence is Putative pyridoxine kinase (276 aa).

Asparagine 139 contributes to the ATP binding site. Position 142 (glutamate 142) interacts with Mg(2+). ATP-binding positions include 176 to 180 (KGGKA), aspartate 188, glycine 213, and lysine 238.

The protein belongs to the ThiD family.

The catalysed reaction is pyridoxal + ATP = pyridoxal 5'-phosphate + ADP + H(+). Functionally, phosphorylates B6 vitamers; functions in a salvage pathway. Uses pyridoxal, pyridoxine, and pyridoxamine as substrates. The chain is Putative pyridoxine kinase (pdxK) from Staphylococcus aureus (strain COL).